A 517-amino-acid chain; its full sequence is GMP synthase [glutamine-hydrolyzing] (517 aa).

The Glutamine amidotransferase type-1 domain maps to 9 to 199 (RILILDFGSQ…VLNVCGCEGL (191 aa)). Residue Cys-86 is the Nucleophile of the active site. Active-site residues include His-173 and Glu-175. The 193-residue stretch at 200–392 (WTSASIIEDA…LGLPYNMLYR (193 aa)) folds into the GMPS ATP-PPase domain. 227-233 (SGGVDSS) is an ATP binding site.

As to quaternary structure, homodimer.

The enzyme catalyses XMP + L-glutamine + ATP + H2O = GMP + L-glutamate + AMP + diphosphate + 2 H(+). It functions in the pathway purine metabolism; GMP biosynthesis; GMP from XMP (L-Gln route): step 1/1. Catalyzes the synthesis of GMP from XMP. In Aliivibrio fischeri (strain MJ11) (Vibrio fischeri), this protein is GMP synthase [glutamine-hydrolyzing].